The sequence spans 396 residues: Maltose/maltodextrin-binding periplasmic protein (396 aa).

The first 26 residues, 1–26 (MKIKTGARILALSALTTMMFSASALA), serve as a signal peptide directing secretion.

The protein belongs to the bacterial solute-binding protein 1 family. In terms of assembly, the complex is composed of two ATP-binding proteins (MalK), two transmembrane proteins (MalG and MalF) and a solute-binding protein (MalE).

Its subcellular location is the periplasm. Functionally, part of the ABC transporter complex MalEFGK involved in maltose/maltodextrin import. Binds maltose and higher maltodextrins. This chain is Maltose/maltodextrin-binding periplasmic protein (malE), found in Klebsiella aerogenes (Enterobacter aerogenes).